A 94-amino-acid chain; its full sequence is Protein S100-A1 (94 aa).

2 EF-hand domains span residues 13–48 and 50–85; these read INVF…FLDV and KDAD…LTVA. Residues lysine 28, glutamate 33, aspartate 63, asparagine 65, aspartate 67, glutamate 69, and glutamate 74 each contribute to the Ca(2+) site. Cysteine 86 carries the S-nitrosocysteine modification.

This sequence belongs to the S-100 family. In terms of assembly, dimer of either two alpha chains, or two beta chains, or one alpha and one beta chain. Also forms heterodimers with S100P. Interacts with AGER. Interacts with CAPZA1. Interacts with FKBP4. Interacts with RYR1 and RYR2. Interacts with CACYBP in a calcium-dependent manner. Interacts with PPP5C (via TPR repeats); the interaction is calcium-dependent and modulates PPP5C activity. Interacts with ATP2A2 and PLN in a Ca(2+)-dependent manner. Interacts with mitochondrial F1-ATPase subunits ATP5F1A and ATP5F1B; these interactions increase F1-ATPase activity. In terms of processing, glutathionylated; glutathionylation increases affinity to calcium about 10-fold. Expressed in the cardiac and the skeletal muscles.

It localises to the cytoplasm. It is found in the sarcoplasmic reticulum. The protein resides in the mitochondrion. Small calcium binding protein that plays important roles in several biological processes such as Ca(2+) homeostasis, chondrocyte biology and cardiomyocyte regulation. In response to an increase in intracellular Ca(2+) levels, binds calcium which triggers conformational changes. These changes allow interactions with specific target proteins and modulate their activity. Regulates a network in cardiomyocytes controlling sarcoplasmic reticulum Ca(2+) cycling and mitochondrial function through interaction with the ryanodine receptors RYR1 and RYR2, sarcoplasmic reticulum Ca(2+)-ATPase/ATP2A2 and mitochondrial F1-ATPase. Facilitates diastolic Ca(2+) dissociation and myofilament mechanics in order to improve relaxation during diastole. The sequence is that of Protein S100-A1 (S100a1) from Mus musculus (Mouse).